Reading from the N-terminus, the 357-residue chain is Protein Wnt-9b (357 aa).

The signal sequence occupies residues 1 to 22 (MRPPPALALAGLCLLALPAAAA). 11 cysteine pairs are disulfide-bonded: Cys89/Cys100, Cys135/Cys143, Cys145/Cys162, Cys210/Cys224, Cys212/Cys219, Cys291/Cys316, Cys305/Cys311, Cys315/Cys355, Cys331/Cys346, Cys333/Cys343, and Cys338/Cys339. N-linked (GlcNAc...) asparagine glycosylation is present at Asn99. Ser216 is lipidated: O-palmitoleoyl serine; by PORCN.

The protein belongs to the Wnt family. As to quaternary structure, forms a soluble 1:1 complex with AFM; this prevents oligomerization and is required for prolonged biological activity. The complex with AFM may represent the physiological form in body fluids. Component of the Wnt-Fzd-LRP5-LRP6 signaling complex that contains a WNT protein, a FZD protein and LRP5 or LRP6. Interacts directly in the complex with LRP6. Interacts with PKD1 (via extracellular domain). In terms of processing, palmitoleoylation is required for efficient binding to frizzled receptors. Depalmitoleoylation leads to Wnt signaling pathway inhibition. In terms of tissue distribution, moderately expressed in fetal kidney and adult kidney. Also found in brain.

The protein resides in the secreted. It is found in the extracellular space. It localises to the extracellular matrix. Its function is as follows. Ligand for members of the frizzled family of seven transmembrane receptors. Functions in the canonical Wnt/beta-catenin signaling pathway. Required for normal embryonic kidney development, and for normal development of the urogenital tract, including uterus and part of the oviduct and the upper vagina in females, and epididymis and vas deferens in males. Activates a signaling cascade in the metanephric mesenchyme that induces tubulogenesis. Acts upstream of WNT4 in the signaling pathways that mediate development of kidney tubules and the Muellerian ducts. Plays a role in cranofacial development and is required for normal fusion of the palate during embryonic development. The sequence is that of Protein Wnt-9b (WNT9B) from Homo sapiens (Human).